The following is a 274-amino-acid chain: PTS system sorbose-specific EIID component (274 aa).

Residues 4-273 (KKITQGDLVS…GIIGNALGFL (270 aa)) form the PTS EIID domain. A run of 6 helical transmembrane segments spans residues 61–81 (LVFF…TAAM), 99–119 (IKVG…WGTL), 126–146 (LGAS…FFIF), 186–206 (ILGL…NVPL), 226–246 (ILDQ…MVRL), and 253–273 (PVWL…LGFL).

It localises to the cell inner membrane. In terms of biological role, the phosphoenolpyruvate-dependent sugar phosphotransferase system (PTS), a major carbohydrate active transport system, catalyzes the phosphorylation of incoming sugar substrates concomitant with their translocation across the cell membrane. The enzyme II SorABFM PTS system is involved in sorbose transport. The polypeptide is PTS system sorbose-specific EIID component (Klebsiella pneumoniae).